A 227-amino-acid chain; its full sequence is Cytochrome c oxidase subunit 2 (227 aa).

Over 1–14 (MANHSQLGFQDASS) the chain is Mitochondrial intermembrane. A helical membrane pass occupies residues 15 to 45 (PIMEELVEFHDHALMVALAICSLVLYLLTLM). Residues 46 to 58 (LMEKLSSNTVDAQ) are Mitochondrial matrix-facing. Residues 59 to 86 (EVELIWTILPAIVLVLLALPSLQILYMM) form a helical membrane-spanning segment. Residues 87–227 (DEIDEPDLTL…FEAWSSLLSS (141 aa)) are Mitochondrial intermembrane-facing. Residues H160, C195, E197, C199, H203, and M206 each coordinate Cu cation. E197 provides a ligand contact to Mg(2+).

The protein belongs to the cytochrome c oxidase subunit 2 family. Component of the cytochrome c oxidase (complex IV, CIV), a multisubunit enzyme composed of 14 subunits. The complex is composed of a catalytic core of 3 subunits MT-CO1, MT-CO2 and MT-CO3, encoded in the mitochondrial DNA, and 11 supernumerary subunits COX4I, COX5A, COX5B, COX6A, COX6B, COX6C, COX7A, COX7B, COX7C, COX8 and NDUFA4, which are encoded in the nuclear genome. The complex exists as a monomer or a dimer and forms supercomplexes (SCs) in the inner mitochondrial membrane with NADH-ubiquinone oxidoreductase (complex I, CI) and ubiquinol-cytochrome c oxidoreductase (cytochrome b-c1 complex, complex III, CIII), resulting in different assemblies (supercomplex SCI(1)III(2)IV(1) and megacomplex MCI(2)III(2)IV(2)). Found in a complex with TMEM177, COA6, COX18, COX20, SCO1 and SCO2. Interacts with TMEM177 in a COX20-dependent manner. Interacts with COX20. Interacts with COX16. The cofactor is Cu cation.

Its subcellular location is the mitochondrion inner membrane. It carries out the reaction 4 Fe(II)-[cytochrome c] + O2 + 8 H(+)(in) = 4 Fe(III)-[cytochrome c] + 2 H2O + 4 H(+)(out). Component of the cytochrome c oxidase, the last enzyme in the mitochondrial electron transport chain which drives oxidative phosphorylation. The respiratory chain contains 3 multisubunit complexes succinate dehydrogenase (complex II, CII), ubiquinol-cytochrome c oxidoreductase (cytochrome b-c1 complex, complex III, CIII) and cytochrome c oxidase (complex IV, CIV), that cooperate to transfer electrons derived from NADH and succinate to molecular oxygen, creating an electrochemical gradient over the inner membrane that drives transmembrane transport and the ATP synthase. Cytochrome c oxidase is the component of the respiratory chain that catalyzes the reduction of oxygen to water. Electrons originating from reduced cytochrome c in the intermembrane space (IMS) are transferred via the dinuclear copper A center (CU(A)) of subunit 2 and heme A of subunit 1 to the active site in subunit 1, a binuclear center (BNC) formed by heme A3 and copper B (CU(B)). The BNC reduces molecular oxygen to 2 water molecules using 4 electrons from cytochrome c in the IMS and 4 protons from the mitochondrial matrix. The protein is Cytochrome c oxidase subunit 2 (MT-CO2) of Gallus gallus (Chicken).